The chain runs to 173 residues: Calmodulin-like protein 11 (173 aa).

The span at 1 to 26 (MEEIQQQQQQQQQQQQQQQQQQQQQQ) shows a compositional bias: low complexity. A disordered region spans residues 1 to 27 (MEEIQQQQQQQQQQQQQQQQQQQQQQE). EF-hand domains lie at 31–66 (EQIM…LDQN), 67–102 (PTEQ…QLQE), 104–139 (DADE…LGEK), and 140–173 (LTDE…MING). Ca(2+) is bound by residues Asp44, Asp46, Asp48, Cys50, Glu55, Asp80, Asp82, Asn84, Thr86, Glu91, Asp117, Asp119, Asn121, Tyr123, Glu128, Asp153, Asp155, Asp157, Gln159, and Glu164.

The protein belongs to the calmodulin family.

Functionally, potential calcium sensor. The sequence is that of Calmodulin-like protein 11 (CML11) from Arabidopsis thaliana (Mouse-ear cress).